The primary structure comprises 360 residues: Protein Wnt-2 (360 aa).

The signal sequence occupies residues 1 to 26 (MNSSSLFGIWLSVPLILSWVTPQVSS). Disulfide bonds link C76–C87, C127–C135, C137–C157, C206–C220, C208–C215, C278–C309, C294–C304, C308–C348, C324–C339, C326–C336, and C331–C332. S212 carries O-palmitoleoyl serine; by PORCN lipidation. N295 is a glycosylation site (N-linked (GlcNAc...) asparagine).

This sequence belongs to the Wnt family. Post-translationally, palmitoleoylation is required for efficient binding to frizzled receptors. Depalmitoleoylation leads to Wnt signaling pathway inhibition.

It localises to the secreted. Its subcellular location is the extracellular space. The protein localises to the extracellular matrix. Its function is as follows. Ligand for members of the frizzled family of seven transmembrane receptors. Functions in the canonical Wnt signaling pathway that results in activation of transcription factors of the TCF/LEF family. Functions as a upstream regulator of FGF10 expression. Plays an important role in embryonic lung development. May contribute to embryonic brain development by regulating the proliferation of dopaminergic precursors and neurons. This is Protein Wnt-2 (WNT2) from Monodelphis domestica (Gray short-tailed opossum).